The following is a 600-amino-acid chain: Baculoviral IAP repeat-containing protein 3 (600 aa).

The BIR 1 repeat unit spans residues 27-94 (ELYRLSTYSA…RKLYPSCNFV (68 aa)). Serine 138 is subject to Phosphoserine. BIR repeat units lie at residues 167 to 233 (EKAR…CPFL) and 253 to 320 (HAAR…CEYL). Zn(2+) is bound by residues cysteine 290, cysteine 293, histidine 310, and cysteine 317. One can recognise a CARD domain in the interval 436 to 525 (EESDDLALIR…ALYRDIFVQQ (90 aa)). The segment at 553–588 (CKVCMDREVSIVFIPCGHLVVCKDCAPSLRKCPICR) adopts an RING-type zinc-finger fold.

The protein belongs to the IAP family. Interacts with PRSS25; the interaction inhibits apoptotic suppressor activity. The BIR motifs region interacts with TNF receptor associated factors 1 and 2 (TRAF1 and TRAF2) to form a heteromeric complex, which is then recruited to the tumor necrosis factor receptor 2 (TNFR2). Interaction with TRAF2 is required for ubiquitination of IKBKE, degradation of NFKBIA and activation of NF-kappa-B. Interacts with RIP1, RIP2, RIP3, RIP4 and USP19. Auto-ubiquitinated and degraded by the proteasome in apoptotic cells.

It localises to the cytoplasm. It is found in the nucleus. The enzyme catalyses S-ubiquitinyl-[E2 ubiquitin-conjugating enzyme]-L-cysteine + [acceptor protein]-L-lysine = [E2 ubiquitin-conjugating enzyme]-L-cysteine + N(6)-ubiquitinyl-[acceptor protein]-L-lysine.. With respect to regulation, USP19 regulates the stability of BIRC3/c-IAP2 by preventing its ubiquitination. Its function is as follows. Multi-functional protein which regulates not only caspases and apoptosis, but also modulates inflammatory signaling and immunity, mitogenic kinase signaling and cell proliferation, as well as cell invasion and metastasis. Acts as an E3 ubiquitin-protein ligase regulating NF-kappa-B signaling and regulates both canonical and non-canonical NF-kappa-B signaling by acting in opposite directions: acts as a positive regulator of the canonical pathway and suppresses constitutive activation of non-canonical NF-kappa-B signaling. The target proteins for its E3 ubiquitin-protein ligase activity include: RIPK1, RIPK2, RIPK3, RIPK4, CASP3, CASP7, CASP8, IKBKE, TRAF1, and BCL10. Acts as an important regulator of innate immune signaling via regulation of Toll-like receptors (TLRs), Nodlike receptors (NLRs) and RIG-I like receptors (RLRs), collectively referred to as pattern recognition receptors (PRRs). Protects cells from spontaneous formation of the ripoptosome, a large multi-protein complex that has the capability to kill cancer cells in a caspase-dependent and caspase-independent manner. Suppresses ripoptosome formation by ubiquitinating RIPK1 and CASP8. In Mus musculus (Mouse), this protein is Baculoviral IAP repeat-containing protein 3 (Birc3).